The chain runs to 198 residues: Dephospho-CoA kinase (198 aa).

The DPCK domain occupies 4 to 198 (FLGLTGGIAS…LSDLLQEIGR (195 aa)). An ATP-binding site is contributed by 12–17 (ASGKST).

The protein belongs to the CoaE family.

It is found in the cytoplasm. The enzyme catalyses 3'-dephospho-CoA + ATP = ADP + CoA + H(+). It functions in the pathway cofactor biosynthesis; coenzyme A biosynthesis; CoA from (R)-pantothenate: step 5/5. In terms of biological role, catalyzes the phosphorylation of the 3'-hydroxyl group of dephosphocoenzyme A to form coenzyme A. This Lactobacillus johnsonii (strain CNCM I-12250 / La1 / NCC 533) protein is Dephospho-CoA kinase.